The chain runs to 526 residues: Protein ERGIC-53-like (526 aa).

Positions 1-25 (MPAVSGPGPLFCLLLLLLDPHSPET) are cleaved as a signal peptide. Residues 26 to 462 (GCPPLRRFEY…QPPRASSCLQ (437 aa)) lie on the Lumenal side of the membrane. An L-type lectin-like domain is found at 31–252 (RRFEYKLSFK…DVLSFLTFSL (222 aa)). N-linked (GlcNAc...) asparagine glycosylation is present at N75. C176 and C215 are disulfide-bonded. A helical transmembrane segment spans residues 463–483 (PGIFLFYLLIQTVGFFGYVHF). The Cytoplasmic portion of the chain corresponds to 484-526 (RQELNKSLQECLSTGSLPLGPAPHTPRALGILRRQPLPASMPA).

Highly expressed in normal and neoplastic prostate. Also expressed in cardiac atrium, salivary gland, spleen and selective cells in the CNS.

It is found in the endoplasmic reticulum-Golgi intermediate compartment membrane. This Homo sapiens (Human) protein is Protein ERGIC-53-like (LMAN1L).